Here is a 348-residue protein sequence, read N- to C-terminus: Erythronate-4-phosphate dehydrogenase (348 aa).

Substrate is bound by residues Thr46 and Thr67. Asp147 contributes to the NAD(+) binding site. Arg209 is a catalytic residue. Residue Asp233 participates in NAD(+) binding. Glu238 is a catalytic residue. The Proton donor role is filled by His255. Position 258 (Gly258) interacts with NAD(+). Tyr259 serves as a coordination point for substrate.

Belongs to the D-isomer specific 2-hydroxyacid dehydrogenase family. PdxB subfamily. Homodimer.

It localises to the cytoplasm. It catalyses the reaction 4-phospho-D-erythronate + NAD(+) = (R)-3-hydroxy-2-oxo-4-phosphooxybutanoate + NADH + H(+). It functions in the pathway cofactor biosynthesis; pyridoxine 5'-phosphate biosynthesis; pyridoxine 5'-phosphate from D-erythrose 4-phosphate: step 2/5. In terms of biological role, catalyzes the oxidation of erythronate-4-phosphate to 3-hydroxy-2-oxo-4-phosphonooxybutanoate. The protein is Erythronate-4-phosphate dehydrogenase of Bacteroides fragilis (strain ATCC 25285 / DSM 2151 / CCUG 4856 / JCM 11019 / LMG 10263 / NCTC 9343 / Onslow / VPI 2553 / EN-2).